A 978-amino-acid polypeptide reads, in one-letter code: Sensor histidine kinase TodS (978 aa).

A PAS 1 domain is found at 32 to 103 (CEEHARIIFD…TQKRLVETAS (72 aa)). The PAC 1 domain maps to 108–162 (VRCDVEILGKSGGREVIAVDFSLLPICNEEGSIVYLLAEGRNITDKKKAEAMLAL). One can recognise a Histidine kinase 1 domain in the interval 187-405 (KVSHELRTPL…LFQVKLPLNA (219 aa)). His-190 is subject to Phosphohistidine; by autocatalysis. In terms of domain architecture, Response regulatory spans 452 to 567 (RVLIVEDNPD…ELRARVSNLV (116 aa)). Asp-500 is subject to 4-aspartylphosphate. In terms of domain architecture, PAS 2 spans 611 to 681 (SEARWKAVYE…QRLANLLQGG (71 aa)). Residues 685 to 737 (YSVERSYLCKNGSTIWANASVSLMPQRVGESPVILQIIDDITEKKQAQENLNQ) form the PAC 2 domain. Residues 757–974 (YIAHEINQPL…CFLVSIPARQ (218 aa)) form the Histidine kinase 2 domain. His-760 carries the phosphohistidine modification.

In terms of assembly, homodimer. Binds as a dimer to a pseudopalindromic sequence. In terms of processing, autophosphorylated. Activation requires a sequential transfer of a phosphate group from a His in the primary transmitter domain, to an Asp in the receiver domain and to a His in the secondary transmitter domain.

It is found in the cytoplasm. The enzyme catalyses ATP + protein L-histidine = ADP + protein N-phospho-L-histidine.. Its function is as follows. Member of the two-component regulatory system TodS/TodT involved in the regulation of toluene degradation. Phosphorylates TodT via a four-step phosphorelay in response to toluene. The sequence is that of Sensor histidine kinase TodS (todS) from Pseudomonas putida (strain ATCC 700007 / DSM 6899 / JCM 31910 / BCRC 17059 / LMG 24140 / F1).